Reading from the N-terminus, the 231-residue chain is Thrombin-like enzyme leucurobin (231 aa).

Residues 1–223 (VIGGDECDIN…YLPWIQSIIA (223 aa)) form the Peptidase S1 domain. Cystine bridges form between Cys7-Cys139, Cys26-Cys42, Cys74-Cys230, Cys118-Cys184, Cys150-Cys163, and Cys174-Cys199. Catalysis depends on charge relay system residues His41 and Asp86. N-linked (GlcNAc...) asparagine glycosylation occurs at Asn146. Ser178 serves as the catalytic Charge relay system. Asn225 carries N-linked (GlcNAc...) asparagine glycosylation.

It belongs to the peptidase S1 family. Snake venom subfamily. Monomer. In terms of processing, glycosylated. In terms of tissue distribution, expressed by the venom gland.

The protein localises to the secreted. The enzyme catalyses Selective cleavage of Arg-|-Xaa bond in fibrinogen, to form fibrin, and release fibrinopeptide A. The specificity of further degradation of fibrinogen varies with species origin of the enzyme.. Inhibited by PMSF and benzamidine. Its clotting effect is strongly inhibited by antibothropic serum. Is not inhibited by heparin. In terms of biological role, thrombin-like snake venom serine protease that cleaves Arg-Gly bonds in alpha-chain of fibrinogen (FGA). Induces temporary episodes of opisthotonos and rapid rolling around the long axis of the animal (gyroxin-like effect), when injected into the tail veins of mice (0.143 ug/g mouse). The chain is Thrombin-like enzyme leucurobin from Bothrops leucurus (Whitetail lancehead).